Consider the following 277-residue polypeptide: 3-methyl-2-oxobutanoate hydroxymethyltransferase (277 aa).

The Mg(2+) site is built by aspartate 43 and aspartate 82. Residues 43-44 (DS), aspartate 82, and lysine 112 contribute to the 3-methyl-2-oxobutanoate site. Residue glutamate 114 participates in Mg(2+) binding. Glutamate 181 acts as the Proton acceptor in catalysis.

It belongs to the PanB family. As to quaternary structure, homodecamer; pentamer of dimers. Mg(2+) is required as a cofactor.

It localises to the cytoplasm. The catalysed reaction is 3-methyl-2-oxobutanoate + (6R)-5,10-methylene-5,6,7,8-tetrahydrofolate + H2O = 2-dehydropantoate + (6S)-5,6,7,8-tetrahydrofolate. Its pathway is cofactor biosynthesis; (R)-pantothenate biosynthesis; (R)-pantoate from 3-methyl-2-oxobutanoate: step 1/2. In terms of biological role, catalyzes the reversible reaction in which hydroxymethyl group from 5,10-methylenetetrahydrofolate is transferred onto alpha-ketoisovalerate to form ketopantoate. This Bacillus licheniformis (strain ATCC 14580 / DSM 13 / JCM 2505 / CCUG 7422 / NBRC 12200 / NCIMB 9375 / NCTC 10341 / NRRL NRS-1264 / Gibson 46) protein is 3-methyl-2-oxobutanoate hydroxymethyltransferase.